Reading from the N-terminus, the 234-residue chain is Synaptogyrin-4 (234 aa).

In terms of domain architecture, MARVEL spans 18-169 (FLRRPKTITR…QAYLAFQDLR (152 aa)). The next 4 helical transmembrane spans lie at 25–45 (ITRV…LTDG), 66–86 (CSFA…FLVL), 104–124 (LLDF…FCFL), and 145–165 (AAIA…YLAF).

The protein belongs to the synaptogyrin family.

The protein resides in the membrane. In Homo sapiens (Human), this protein is Synaptogyrin-4 (SYNGR4).